A 438-amino-acid chain; its full sequence is Delta(14)-sterol reductase ERG24 (438 aa).

Residues 1-13 (MVSALNPRTTEFE) lie on the Lumenal side of the membrane. Residues 14 to 34 (FGGLIGALGISIGLPVFTIIL) traverse the membrane as a helical segment. The Cytoplasmic segment spans residues 35–71 (NQMIRPDYFIKGFFQNFDIVELWNGIKPLRYYLGNRE). Residues 72-90 (LWTVYCLWYGILAVLDVIL) traverse the membrane as a helical segment. The Lumenal portion of the chain corresponds to 91–109 (PGRVMKGVQLRDGSKLSYK). The chain crosses the membrane as a helical span at residues 110-127 (INGIAMSTTLVLVLAIRW). At 128–147 (KLTDGQLPELQYLYENHVSL) the chain is on the cytoplasmic side. The chain crosses the membrane as a helical span at residues 148-172 (CIISILFSFFLATYCYVASFIPLIF). Over 173–242 (KKNGNGKREK…LHHHYLKTGK (70 aa)) the chain is Lumenal. Residues 243-263 (INDALVLVNFLQGFYIFDGVL) traverse the membrane as a helical segment. At 264–308 (NEEGVLTMMDITTDGFGFMLAFGDLSLVPFTYSLQARYLSVSPVE) the chain is on the cytoplasmic side. A helical membrane pass occupies residues 309–328 (LGWVKVVGILAIMFLGFHIF). Topologically, residues 329–368 (HSANKQKSEFRQGKLENLKSIQTKRGTKLLCDGWWAKSQH) are lumenal. Residues lysine 335, arginine 339, leucine 358, tryptophan 363, 370–371 (NY), aspartate 410, 414–418 (CRLKY), and tyrosine 425 each bind NADP(+). Residues 369–387 (INYFGDWLISLSWCLATWF) traverse the membrane as a helical segment. The Cytoplasmic segment spans residues 388 to 438 (QTPLTYYYSLYFATLLLHRQQRDEHKCRLKYGENWEEYERKVPYKIIPYVY).

This sequence belongs to the ERG4/ERG24 family.

The protein resides in the membrane. The catalysed reaction is 4,4-dimethyl-5alpha-cholesta-8,24-dien-3beta-ol + NADP(+) = 4,4-dimethyl-5alpha-cholesta-8,14,24-trien-3beta-ol + NADPH + H(+). It participates in steroid biosynthesis; zymosterol biosynthesis; zymosterol from lanosterol: step 2/6. With respect to regulation, inhibited by the morpholine antifungal drug fenpropimorph. Delta(14)-sterol reductase; part of the third module of ergosterol biosynthesis pathway that includes the late steps of the pathway. ERG24 reduces the C14=C15 double bond of 4,4-dimethyl-cholesta-8,14,24-trienol to produce 4,4-dimethyl-cholesta-8,24-dienol. The third module or late pathway involves the ergosterol synthesis itself through consecutive reactions that mainly occur in the endoplasmic reticulum (ER) membrane. Firstly, the squalene synthase ERG9 catalyzes the condensation of 2 farnesyl pyrophosphate moieties to form squalene, which is the precursor of all steroids. Squalene synthase is crucial for balancing the incorporation of farnesyl diphosphate (FPP) into sterol and nonsterol isoprene synthesis. Secondly, the squalene epoxidase ERG1 catalyzes the stereospecific oxidation of squalene to (S)-2,3-epoxysqualene, which is considered to be a rate-limiting enzyme in steroid biosynthesis. Then, the lanosterol synthase ERG7 catalyzes the cyclization of (S)-2,3 oxidosqualene to lanosterol, a reaction that forms the sterol core. In the next steps, lanosterol is transformed to zymosterol through a complex process involving various demethylation, reduction and desaturation reactions. The lanosterol 14-alpha-demethylase ERG11 (also known as CYP51) catalyzes C14-demethylation of lanosterol to produce 4,4'-dimethyl cholesta-8,14,24-triene-3-beta-ol, which is critical for ergosterol biosynthesis. The C-14 reductase ERG24 reduces the C14=C15 double bond of 4,4-dimethyl-cholesta-8,14,24-trienol to produce 4,4-dimethyl-cholesta-8,24-dienol. 4,4-dimethyl-cholesta-8,24-dienol is substrate of the C-4 demethylation complex ERG25-ERG26-ERG27 in which ERG25 catalyzes the three-step monooxygenation required for the demethylation of 4,4-dimethyl and 4alpha-methylsterols, ERG26 catalyzes the oxidative decarboxylation that results in a reduction of the 3-beta-hydroxy group at the C-3 carbon to an oxo group, and ERG27 is responsible for the reduction of the keto group on the C-3. ERG28 has a role as a scaffold to help anchor ERG25, ERG26 and ERG27 to the endoplasmic reticulum and ERG29 regulates the activity of the iron-containing C4-methylsterol oxidase ERG25. Then, the sterol 24-C-methyltransferase ERG6 catalyzes the methyl transfer from S-adenosyl-methionine to the C-24 of zymosterol to form fecosterol. The C-8 sterol isomerase ERG2 catalyzes the reaction which results in unsaturation at C-7 in the B ring of sterols and thus converts fecosterol to episterol. The sterol-C5-desaturase ERG3 then catalyzes the introduction of a C-5 double bond in the B ring to produce 5-dehydroepisterol. The C-22 sterol desaturase ERG5 further converts 5-dehydroepisterol into ergosta-5,7,22,24(28)-tetraen-3beta-ol by forming the C-22(23) double bond in the sterol side chain. Finally, ergosta-5,7,22,24(28)-tetraen-3beta-ol is substrate of the C-24(28) sterol reductase ERG4 to produce ergosterol. This chain is Delta(14)-sterol reductase ERG24, found in Saccharomyces cerevisiae (strain ATCC 204508 / S288c) (Baker's yeast).